The following is a 374-amino-acid chain: GDSL esterase/lipase At1g71250 (374 aa).

A signal peptide spans 1 to 28 (MNTNRKKMKVHIGGYVLILALTVSVILQ). The active-site Nucleophile is Ser48. N-linked (GlcNAc...) asparagine glycosylation occurs at Asn162. Active-site residues include Asp338 and His341.

The protein belongs to the 'GDSL' lipolytic enzyme family.

The protein localises to the secreted. The sequence is that of GDSL esterase/lipase At1g71250 from Arabidopsis thaliana (Mouse-ear cress).